We begin with the raw amino-acid sequence, 146 residues long: Protein translocase subunit SecE (146 aa).

The interval 1 to 81 (MSDERYAASD…KVKKPKKSAD (81 aa)) is disordered. Residues 10 to 20 (DGGGTEVGSGT) are compositionally biased toward gly residues. The span at 45 to 54 (RAANASNTGA) shows a compositional bias: polar residues. The span at 69–81 (KEGKVKKPKKSAD) shows a compositional bias: basic and acidic residues. Residues 118 to 138 (VVLAFLAFMVALVGLADFGLA) traverse the membrane as a helical segment.

It belongs to the SecE/SEC61-gamma family. In terms of assembly, component of the Sec protein translocase complex. Heterotrimer consisting of SecY, SecE and SecG subunits. The heterotrimers can form oligomers, although 1 heterotrimer is thought to be able to translocate proteins. Interacts with the ribosome. Interacts with SecDF, and other proteins may be involved. Interacts with SecA.

It is found in the cell membrane. Essential subunit of the Sec protein translocation channel SecYEG. Clamps together the 2 halves of SecY. May contact the channel plug during translocation. In Mycobacterium leprae (strain TN), this protein is Protein translocase subunit SecE.